A 141-amino-acid chain; its full sequence is VLSSADKNNVKACWGKIGSHAGEYGAEALERTFCSFPTTKTYFPHFDLSHGSAQVQTHGQKVADALTKAVAHINDLPNALSDLSDLHAYKLRVDPVNFKFLSHCLLVTLACHHPEEFTPAVHASLDKFFSAVSTVLTSKYR.

A Globin domain is found at 1-141; sequence VLSSADKNNV…VSTVLTSKYR (141 aa). Serine 3 bears the Phosphoserine mark. Lysine 7 and lysine 11 each carry N6-succinyllysine. Lysine 16 carries the N6-acetyllysine; alternate modification. Lysine 16 carries the post-translational modification N6-succinyllysine; alternate. Residue tyrosine 24 is modified to Phosphotyrosine. Serine 35 bears the Phosphoserine mark. Position 40 is an N6-succinyllysine (lysine 40). Serine 49 carries the post-translational modification Phosphoserine. An O2-binding site is contributed by histidine 58. Histidine 87 contacts heme b. Serine 102 bears the Phosphoserine mark. Threonine 108 is modified (phosphothreonine). Serine 124 carries the phosphoserine modification. Threonine 134 and threonine 137 each carry phosphothreonine. Serine 138 carries the phosphoserine modification.

The protein belongs to the globin family. As to quaternary structure, heterotetramer of two alpha chains and two beta chains. Red blood cells.

In terms of biological role, involved in oxygen transport from the lung to the various peripheral tissues. Its function is as follows. Hemopressin acts as an antagonist peptide of the cannabinoid receptor CNR1. Hemopressin-binding efficiently blocks cannabinoid receptor CNR1 and subsequent signaling. The sequence is that of Hemoglobin subunit alpha (HBA) from Panthera pardus saxicolor (Northern Persian leopard).